A 173-amino-acid chain; its full sequence is MSEDTNKNENVDNIPDNFDDNVSFTKLNEDVKDELALAKESLMRATADFENIKKRLEREKGEAVKFANESFARDLLPVIDALEIASNLQSGDDEIANKIKDGINLTIEQFKKCFEKYGIKEIRTDAEFNPEFHNAINYIESDEVESGKIAAVYQKGYLYNDRVLRPSMVVIAK.

This sequence belongs to the GrpE family. Homodimer.

It localises to the cytoplasm. In terms of biological role, participates actively in the response to hyperosmotic and heat shock by preventing the aggregation of stress-denatured proteins, in association with DnaK and GrpE. It is the nucleotide exchange factor for DnaK and may function as a thermosensor. Unfolded proteins bind initially to DnaJ; upon interaction with the DnaJ-bound protein, DnaK hydrolyzes its bound ATP, resulting in the formation of a stable complex. GrpE releases ADP from DnaK; ATP binding to DnaK triggers the release of the substrate protein, thus completing the reaction cycle. Several rounds of ATP-dependent interactions between DnaJ, DnaK and GrpE are required for fully efficient folding. This is Protein GrpE from Campylobacter fetus subsp. fetus (strain 82-40).